Consider the following 330-residue polypeptide: Ribosomal RNA small subunit methyltransferase H (330 aa).

Residues 50 to 52 (GGH), Asp69, Leu103, Asp117, and Gln124 each bind S-adenosyl-L-methionine.

Belongs to the methyltransferase superfamily. RsmH family.

It localises to the cytoplasm. It catalyses the reaction cytidine(1402) in 16S rRNA + S-adenosyl-L-methionine = N(4)-methylcytidine(1402) in 16S rRNA + S-adenosyl-L-homocysteine + H(+). Functionally, specifically methylates the N4 position of cytidine in position 1402 (C1402) of 16S rRNA. The polypeptide is Ribosomal RNA small subunit methyltransferase H (Saccharopolyspora erythraea (strain ATCC 11635 / DSM 40517 / JCM 4748 / NBRC 13426 / NCIMB 8594 / NRRL 2338)).